Reading from the N-terminus, the 216-residue chain is 3-isopropylmalate dehydratase small subunit (216 aa).

This sequence belongs to the LeuD family. LeuD type 1 subfamily. Heterodimer of LeuC and LeuD.

The catalysed reaction is (2R,3S)-3-isopropylmalate = (2S)-2-isopropylmalate. Its pathway is amino-acid biosynthesis; L-leucine biosynthesis; L-leucine from 3-methyl-2-oxobutanoate: step 2/4. In terms of biological role, catalyzes the isomerization between 2-isopropylmalate and 3-isopropylmalate, via the formation of 2-isopropylmaleate. This Psychrobacter sp. (strain PRwf-1) protein is 3-isopropylmalate dehydratase small subunit.